Here is a 135-residue protein sequence, read N- to C-terminus: PTS system sorbose-specific EIIA component (135 aa).

Residues 1–131 (MVHAIFCAHG…CVVWQQPETV (131 aa)) form the PTS EIIA type-4 domain. The active-site Tele-phosphohistidine intermediate is the histidine 9. Histidine 9 is subject to Phosphohistidine; by HPr.

The protein resides in the cytoplasm. In terms of biological role, the phosphoenolpyruvate-dependent sugar phosphotransferase system (PTS), a major carbohydrate active transport system, catalyzes the phosphorylation of incoming sugar substrates concomitant with their translocation across the cell membrane. The enzyme II SorABFM PTS system is involved in L-sorbose transport. This Klebsiella pneumoniae protein is PTS system sorbose-specific EIIA component.